The chain runs to 652 residues: Interferon-induced GTP-binding protein Mx1 (652 aa).

The interval 1–27 (MKERTSACRHGTPQKHPDTSEESQAME) is disordered. Residues 58-331 (DLALPAIAVI…LTSHICKSLP (274 aa)) form the Dynamin-type G domain. The tract at residues 68–75 (GDQSSGKS) is G1 motif. 68 to 75 (GDQSSGKS) serves as a coordination point for GTP. Positions 93-95 (VTR) are G2 motif. Residues 169 to 172 (DLPG) form a G3 motif region. Residues 169-173 (DLPGI) and 238-241 (TKPD) contribute to the GTP site. The tract at residues 238-241 (TKPD) is G4 motif. A G5 motif region spans residues 270 to 273 (KCRG). The segment at 332–357 (ILENQINVNHQIASEELQKYGADIPE) is bundle signaling element (BSE). Residues 357-526 (EDDSKRLSFL…HFQMEHIVYC (170 aa)) form a middle domain region. A stalk region spans residues 358-622 (DDSKRLSFLM…TSKCNWFLTE (265 aa)). The GED domain occupies 564–652 (TTEMTQHLNA…AQRKLAKFSN (89 aa)).

The protein belongs to the TRAFAC class dynamin-like GTPase superfamily. Dynamin/Fzo/YdjA family. Homooligomer. Oligomerizes into multimeric filamentous or ring-like structures by virtue of its stalk domain. Oligomerization is critical for GTPase activity, protein stability, and recognition of viral target structures. Interacts with TRPC1, TRPC3, TRPC4, TRPC5, TRPC6 and TRPC7. Interacts with HSPA5. Interacts with TUBB/TUBB5. Interacts with DDX39A and DDX39B. ISGylated.

It localises to the nucleus. It is found in the cytoplasm. The protein localises to the endoplasmic reticulum membrane. Its subcellular location is the perinuclear region. In terms of biological role, interferon-induced dynamin-like GTPase which has antiviral activity against influenza A virus, (IAV) and Thogoto virus (THOV). Inhibits IAV by interfering with the process of primary transcription, probably by affecting the viral polymerase function. The sequence is that of Interferon-induced GTP-binding protein Mx1 (Mx1) from Rattus norvegicus (Rat).